The following is a 485-amino-acid chain: Adenylate kinase 8 (485 aa).

Adenylate kinase regions lie at residues 58 to 258 (PRVF…TFVL) and 269 to 471 (PRIL…SYIV). Residue 67–72 (ASGKHT) coordinates ATP. The tract at residues 87–113 (TPENVLSSDVSLLVKEAQSYRDKGQEV) is NMP 1. AMP is bound by residues 140-143 (GFPK) and Gln147. The tract at residues 177-206 (GKRIDITDGEVYHTTFDWPSDPAVQRNLVE) is LID 1. Arg218 lines the AMP pocket. 278–283 (GSGRSL) provides a ligand contact to ATP. The NMP 2 stretch occupies residues 298-327 (CCGQVLKEAVADQTKLGELIQPYIENDQQV). AMP is bound by residues 325–327 (QQV), 354–357 (GFPQ), and Gln361. The LID 2 stretch occupies residues 391–424 (LCMTDPVSGERYHSIYKPAPRSEVQERLQQNPKY). An AMP-binding site is contributed by Arg432.

This sequence belongs to the adenylate kinase family.

It is found in the cytoplasm. The protein localises to the cytosol. It catalyses the reaction AMP + ATP = 2 ADP. The enzyme catalyses a 2'-deoxyribonucleoside 5'-diphosphate + ATP = a 2'-deoxyribonucleoside 5'-triphosphate + ADP. The catalysed reaction is a ribonucleoside 5'-diphosphate + ATP = a ribonucleoside 5'-triphosphate + ADP. Its function is as follows. Nucleoside monophosphate (NMP) kinase that catalyzes the reversible transfer of the terminal phosphate group between nucleoside triphosphates and monophosphates. Has highest activity toward AMP, and weaker activity toward dAMP, CMP and dCMP. Also displays broad nucleoside diphosphate kinase activity. The polypeptide is Adenylate kinase 8 (ak8) (Xenopus laevis (African clawed frog)).